The following is a 568-amino-acid chain: MFS-type efflux transporter phmH (568 aa).

Over residues Met-1–Gly-11 the composition is skewed to polar residues. The disordered stretch occupies residues Met-1–Lys-39. 7 helical membrane passes run Tyr-45–Leu-65, Tyr-101–Ser-121, Gly-134–Met-154, Ile-161–Ile-181, Ile-199–His-219, Val-237–Gly-257, and Ile-268–Ser-288. A glycan (N-linked (GlcNAc...) asparagine) is linked at Asn-303. Helical transmembrane passes span Ala-307 to Tyr-327, Val-344 to Val-364, Thr-372 to Asp-392, Glu-399 to Leu-419, Thr-437 to Phe-457, and Ile-515 to Leu-535. N-linked (GlcNAc...) asparagine glycosylation occurs at Asn-563.

This sequence belongs to the major facilitator superfamily.

The protein resides in the cell membrane. Functionally, MFS-type efflux transporter; part of the gene cluster that mediates the biosynthesis of thethe mycotoxins phomacins, leucine-derived cytochalasans with potent actin polymerization-inhibitory activities and monocot-specific antigerminative activities. PhmH might be involved in the excretion of phomacins. The protein is MFS-type efflux transporter phmH of Phaeosphaeria nodorum (strain SN15 / ATCC MYA-4574 / FGSC 10173) (Glume blotch fungus).